A 666-amino-acid polypeptide reads, in one-letter code: Probable potassium transport system protein Kup (666 aa).

12 consecutive transmembrane segments (helical) span residues 16–36, 58–78, 99–119, 141–161, 167–187, 221–241, 253–273, 292–312, 343–363, 373–393, 402–422, and 424–444; these read GFII…LYTM, ISLI…LVAL, TPWL…DGAL, IFQN…LLFA, TGVI…FLGI, IFIL…YSDL, WPFV…WILA, FTMH…QALI, TYIP…VLLF, YGLA…FFLI, VLLM…ASAV, and FMHG…IMII.

Belongs to the HAK/KUP transporter (TC 2.A.72) family.

It localises to the cell membrane. It carries out the reaction K(+)(in) + H(+)(in) = K(+)(out) + H(+)(out). Transport of potassium into the cell. Likely operates as a K(+):H(+) symporter. This Streptococcus agalactiae serotype III (strain NEM316) protein is Probable potassium transport system protein Kup.